Consider the following 64-residue polypeptide: uncharacterized protein (64 aa).

This is an uncharacterized protein from African swine fever virus (strain Badajoz 1971 Vero-adapted) (Ba71V).